Here is a 337-residue protein sequence, read N- to C-terminus: Ketol-acid reductoisomerase (NADP(+)) (337 aa).

In terms of domain architecture, KARI N-terminal Rossmann spans 3–183 (LEMFYDDDAD…GGTRAGVIKT (181 aa)). NADP(+) is bound by residues 26–29 (YGSQ), K49, S52, S54, and 84–87 (DTAQ). The active site involves H109. G135 provides a ligand contact to NADP(+). In terms of domain architecture, KARI C-terminal knotted spans 184–329 (TFKDETETDL…KKLRDLMSWV (146 aa)). Residues D192, E196, E228, and E232 each coordinate Mg(2+). S253 is a substrate binding site.

Belongs to the ketol-acid reductoisomerase family. Mg(2+) is required as a cofactor.

The enzyme catalyses (2R)-2,3-dihydroxy-3-methylbutanoate + NADP(+) = (2S)-2-acetolactate + NADPH + H(+). It carries out the reaction (2R,3R)-2,3-dihydroxy-3-methylpentanoate + NADP(+) = (S)-2-ethyl-2-hydroxy-3-oxobutanoate + NADPH + H(+). Its pathway is amino-acid biosynthesis; L-isoleucine biosynthesis; L-isoleucine from 2-oxobutanoate: step 2/4. The protein operates within amino-acid biosynthesis; L-valine biosynthesis; L-valine from pyruvate: step 2/4. In terms of biological role, involved in the biosynthesis of branched-chain amino acids (BCAA). Catalyzes an alkyl-migration followed by a ketol-acid reduction of (S)-2-acetolactate (S2AL) to yield (R)-2,3-dihydroxy-isovalerate. In the isomerase reaction, S2AL is rearranged via a Mg-dependent methyl migration to produce 3-hydroxy-3-methyl-2-ketobutyrate (HMKB). In the reductase reaction, this 2-ketoacid undergoes a metal-dependent reduction by NADPH to yield (R)-2,3-dihydroxy-isovalerate. The polypeptide is Ketol-acid reductoisomerase (NADP(+)) (Mycobacterium bovis (strain BCG / Pasteur 1173P2)).